The chain runs to 702 residues: Protein crooked neck (702 aa).

HAT repeat units lie at residues 56-88 (DYQQ…WEEQ), 90-122 (QEIQ…MEMK), 124-156 (KQVN…MEEM), 158-189 (ENVA…FELR), 191-222 (KEID…FEES), 224-259 (GFIH…FEEG), 261-295 (KEHD…HEKK), 305-337 (VIVS…LIEA), 339-373 (GDRD…LWIN), 383-419 (EDAE…FEIR), 454-486 (REFE…LENL), 488-522 (GDTD…FEVA), and 524-555 (GETE…FEMG). The short motif at 620–628 (PRRIKKRQK) is the Nuclear localization signal element. The segment at 670-702 (KDNTVDDPPATAIASEPEPAADAAPADTTDSGD) is disordered. Over residues 683–702 (ASEPEPAADAAPADTTDSGD) the composition is skewed to low complexity.

Belongs to the crooked-neck family. As to quaternary structure, colocalizes with a complex containing snRNP proteins. Transcribed in all cells during embryonic development.

The protein localises to the nucleus speckle. Functionally, may be involved in pre-mRNA splicing process. Involved in embryonic neurogenesis and cell rearrangement during Malpighian tubule morphogenesis. In Drosophila melanogaster (Fruit fly), this protein is Protein crooked neck (crn).